A 397-amino-acid chain; its full sequence is 2,3-bisphosphoglycerate-independent phosphoglycerate mutase (397 aa).

It belongs to the BPG-independent phosphoglycerate mutase family. A-PGAM subfamily.

The enzyme catalyses (2R)-2-phosphoglycerate = (2R)-3-phosphoglycerate. It functions in the pathway carbohydrate degradation; glycolysis; pyruvate from D-glyceraldehyde 3-phosphate: step 3/5. In terms of biological role, catalyzes the interconversion of 2-phosphoglycerate and 3-phosphoglycerate. This is 2,3-bisphosphoglycerate-independent phosphoglycerate mutase from Methanosarcina acetivorans (strain ATCC 35395 / DSM 2834 / JCM 12185 / C2A).